Reading from the N-terminus, the 246-residue chain is Submandibular gland secretory Glx-rich protein CA (246 aa).

Residues 1 to 18 (MLVVLLTAALLALSSAQG) form the signal peptide. The interval 14–223 (SSAQGTDEEV…SGRPKKPLLP (210 aa)) is disordered. 7 stretches are compositionally biased toward low complexity: residues 39–50 (PVDSGSDPPSAD), 58–71 (EGES…EPPA), 81–93 (QQEP…QEPP), 104–116 (QQEP…QEPP), 127–141 (QQEP…PPAT), 150–159 (QQESTQAENQ), and 178–196 (VESP…QQTN). Tandem repeats lie at residues 67–89 (EEPP…QAEN), 90–112 (QEPP…QAEN), 113–135 (QEPP…QAED), 136–158 (QQPP…QAEN), and 159–181 (QEPS…VESP). The segment at 67-181 (EEPPATSGSE…QPEEGNVESP (115 aa)) is 5 X 23 AA tandem repeats. Over residues 197-216 (PEEKPPAPKTQEEPQHDSGR) the composition is skewed to basic and acidic residues.

As to expression, submandibular gland acinar cells.

Its subcellular location is the secreted. In terms of biological role, GRP proteins have a marked affinity for hydroxyapatite. They may play a role in the formation of the protective acquired pellicle at the saliva-tooth interface. This Rattus norvegicus (Rat) protein is Submandibular gland secretory Glx-rich protein CA (Grpca).